A 68-amino-acid polypeptide reads, in one-letter code: MPKHEFSVDMTCEGCSNAVSRVLNKLGGVEFDIDLPNKKVCINSEHSVDILLETLEKTGKAVSYLGPK.

The 63-residue stretch at 1 to 63 (MPKHEFSVDM…TLEKTGKAVS (63 aa)) folds into the HMA domain. Cys12 and Cys15 together coordinate Cu cation. A Phosphoserine modification is found at Ser47. Lys60 is subject to N6-acetyllysine.

The protein belongs to the ATX1 family. In terms of assembly, homodimer. Interacts with ATP7B. Interacts with ATP7A. Interacts (via dimer form) with SLC31A1 (via C-terminal domain); this interaction improves ATOX1 stability and controls intracellular Cu(I) levels.

Its function is as follows. Binds and deliver cytosolic copper to the copper ATPase proteins. May be important in cellular antioxidant defense. This chain is Copper transport protein ATOX1, found in Canis lupus familiaris (Dog).